The primary structure comprises 479 residues: MAQHAVYFPDAFLTQMREAMPSTLSFDEFISACQRPLRRSIRINTLKISVADFLALIAPYGWSLTPIPWCHEGFWIERDDEEALPLGSTAEHLSGLFYIQEASSMLPVAALFADDNHPQRVMDMAAAPGSKTTQIAARMGNRGAILANEFSASRVKVLHANISRCGIANTALTHFDGRVFGAALPEMFDAILLDAPCSGEGVVRKDPDALKNWSPESNLDIAATQRELLDSAFHALRPGGTLVYSTCTLNRQENEDVCLWLKETYADAVEFLPLGDLFPDADRALTPEGFLHVFPQIYDCEGFFVARLRKMSSLPAMPAPGYKVGAFPFTPLKGREALNVTQAANAVGLLWDENLHLWQREKEVWLFPAEIESLIGKVRFSRLGIKLAESHNKGYRWQHEATIALACPTHAHAFELSAQEAEEWYRGRDIYPQTPPAADDVLVTFQHQPLGLAKRIGARIKNSYPRELVRDGKLFTGNS.

Residues 125–131 (AAAPGSK), Glu-149, Asp-176, and Asp-194 contribute to the S-adenosyl-L-methionine site. Cys-247 serves as the catalytic Nucleophile.

It belongs to the class I-like SAM-binding methyltransferase superfamily. RsmB/NOP family.

Its subcellular location is the cytoplasm. It carries out the reaction cytidine(1407) in 16S rRNA + S-adenosyl-L-methionine = 5-methylcytidine(1407) in 16S rRNA + S-adenosyl-L-homocysteine + H(+). Its function is as follows. Specifically methylates the cytosine at position 1407 (m5C1407) of 16S rRNA. This is Ribosomal RNA small subunit methyltransferase F from Salmonella paratyphi A (strain ATCC 9150 / SARB42).